A 361-amino-acid polypeptide reads, in one-letter code: Single-stranded DNA-binding protein 3 (361 aa).

An N-acetylmethionine modification is found at Met1. One can recognise a LisH domain in the interval 16-48 (AREKLALYVYEYLLHVGAQKSAQTFLSEIRWEK). Arg128, Arg134, and Arg138 each carry asymmetric dimethylarginine. Disordered regions lie at residues 140-166 (GNQPPGGVPGTQPLMPNSMDPTRQQGH) and 184-361 (PMGP…TMSV). The span at 223-241 (PNSANSIPYSSSSPGTYVG) shows a compositional bias: low complexity. Over residues 245-255 (GGGPPGTPIMP) the composition is skewed to pro residues. Positions 258 to 269 (ADSTNSSDNIYT) are enriched in polar residues. The segment covering 288–298 (GSDGPMGGMGG) has biased composition (gly residues). Low complexity predominate over residues 319-330 (NSPNNISGISNP). A phosphoserine mark is found at Ser320, Ser325, and Ser328. Thr333 is modified (phosphothreonine). Over residues 346 to 361 (HSFQNDNYSPSMTMSV) the composition is skewed to polar residues. Phosphoserine occurs at positions 354 and 360.

The protein localises to the nucleus. In terms of biological role, may be involved in transcription regulation of the alpha 2(I) collagen gene where it binds to the single-stranded polypyrimidine sequences in the promoter region. This Rattus norvegicus (Rat) protein is Single-stranded DNA-binding protein 3 (Ssbp3).